Here is a 113-residue protein sequence, read N- to C-terminus: Iron-sulfur cluster insertion protein ErpA (113 aa).

Iron-sulfur cluster contacts are provided by C41, C105, and C107.

Belongs to the HesB/IscA family. In terms of assembly, homodimer. Requires iron-sulfur cluster as cofactor.

Required for insertion of 4Fe-4S clusters for at least IspG. The polypeptide is Iron-sulfur cluster insertion protein ErpA (Histophilus somni (strain 2336) (Haemophilus somnus)).